The primary structure comprises 439 residues: Tol-Pal system protein TolB (439 aa).

The signal sequence occupies residues 1-24 (MRNGMRKIIAGVFIFVFLISNLYA).

The protein belongs to the TolB family. The Tol-Pal system is composed of five core proteins: the inner membrane proteins TolA, TolQ and TolR, the periplasmic protein TolB and the outer membrane protein Pal. They form a network linking the inner and outer membranes and the peptidoglycan layer.

The protein resides in the periplasm. Functionally, part of the Tol-Pal system, which plays a role in outer membrane invagination during cell division and is important for maintaining outer membrane integrity. The protein is Tol-Pal system protein TolB of Francisella tularensis subsp. tularensis (strain FSC 198).